An 83-amino-acid polypeptide reads, in one-letter code: Mu-theraphotoxin-Hhn2b 3 (83 aa).

The N-terminal stretch at 1 to 21 (MKASMFLALAGLVLLFVVCYA) is a signal peptide. Residues 22-48 (SESEEKEFPRELISKIFAVDDFKGEVR) constitute a propeptide that is removed on maturation. 3 cysteine pairs are disulfide-bonded: Cys-50–Cys-65, Cys-57–Cys-70, and Cys-64–Cys-77. A Leucine amide modification is found at Leu-81.

It belongs to the neurotoxin 10 (Hwtx-1) family. 14 (Hntx-1) subfamily. In terms of assembly, monomer. In terms of tissue distribution, expressed by the venom gland.

It is found in the secreted. Functionally, weakly blocks the rat SCN2A/SCN1B (Nav1.2/beta-1) sodium channel (IC(50)=68 uM) and the insect sodium channel para/tipE (IC(50)=4.3 uM), without altering the activation or inactivation kinetics (depressant toxin). The sequence is that of Mu-theraphotoxin-Hhn2b 3 from Cyriopagopus hainanus (Chinese bird spider).